We begin with the raw amino-acid sequence, 147 residues long: Hemoglobin subunit beta (147 aa).

Val-2 is subject to N-acetylvaline. A Globin domain is found at 3–147 (HMSAEEKGIV…VAAALAHKYH (145 aa)). Thr-13 carries the phosphothreonine modification. Ser-45 carries the phosphoserine modification. Lys-60 bears the N6-acetyllysine mark. His-64 lines the heme b pocket. N6-acetyllysine is present on Lys-83. Position 93 (His-93) interacts with heme b. Cys-94 carries the S-nitrosocysteine modification. Lys-145 is subject to N6-acetyllysine.

It belongs to the globin family. In terms of assembly, heterotetramer of two alpha chains and two beta chains. Red blood cells.

Functionally, involved in oxygen transport from the lung to the various peripheral tissues. The protein is Hemoglobin subunit beta (HBB) of Scalopus aquaticus (Eastern mole).